The sequence spans 201 residues: dCTP deaminase, dUMP-forming (201 aa).

Residues 101-106, Asp119, 127-129, Gln148, Tyr162, and Gln174 each bind dCTP; these read KSSLGR and TLE. Glu129 functions as the Proton donor/acceptor in the catalytic mechanism.

Belongs to the dCTP deaminase family. In terms of assembly, homotrimer.

It carries out the reaction dCTP + 2 H2O = dUMP + NH4(+) + diphosphate. Its pathway is pyrimidine metabolism; dUMP biosynthesis; dUMP from dCTP: step 1/1. Functionally, bifunctional enzyme that catalyzes both the deamination of dCTP to dUTP and the hydrolysis of dUTP to dUMP without releasing the toxic dUTP intermediate. This chain is dCTP deaminase, dUMP-forming, found in Clavibacter michiganensis subsp. michiganensis (strain NCPPB 382).